A 194-amino-acid chain; its full sequence is Crossover junction endodeoxyribonuclease RuvC (194 aa).

Catalysis depends on residues Asp-7, Glu-68, and Asp-141. Residues Asp-7, Glu-68, and Asp-141 each coordinate Mg(2+).

Belongs to the RuvC family. Homodimer which binds Holliday junction (HJ) DNA. The HJ becomes 2-fold symmetrical on binding to RuvC with unstacked arms; it has a different conformation from HJ DNA in complex with RuvA. In the full resolvosome a probable DNA-RuvA(4)-RuvB(12)-RuvC(2) complex forms which resolves the HJ. It depends on Mg(2+) as a cofactor.

Its subcellular location is the cytoplasm. The catalysed reaction is Endonucleolytic cleavage at a junction such as a reciprocal single-stranded crossover between two homologous DNA duplexes (Holliday junction).. In terms of biological role, the RuvA-RuvB-RuvC complex processes Holliday junction (HJ) DNA during genetic recombination and DNA repair. Endonuclease that resolves HJ intermediates. Cleaves cruciform DNA by making single-stranded nicks across the HJ at symmetrical positions within the homologous arms, yielding a 5'-phosphate and a 3'-hydroxyl group; requires a central core of homology in the junction. The consensus cleavage sequence is 5'-(A/T)TT(C/G)-3'. Cleavage occurs on the 3'-side of the TT dinucleotide at the point of strand exchange. HJ branch migration catalyzed by RuvA-RuvB allows RuvC to scan DNA until it finds its consensus sequence, where it cleaves and resolves the cruciform DNA. The polypeptide is Crossover junction endodeoxyribonuclease RuvC (Mycolicibacterium vanbaalenii (strain DSM 7251 / JCM 13017 / BCRC 16820 / KCTC 9966 / NRRL B-24157 / PYR-1) (Mycobacterium vanbaalenii)).